Consider the following 144-residue polypeptide: UPF0178 protein Exig_1155 (144 aa).

The tract at residues 110–144 (IRRAGGRTKGPKKRTRQEDASFEQSFSRLLTEKTD) is disordered. Over residues 113 to 124 (AGGRTKGPKKRT) the composition is skewed to basic residues.

The protein belongs to the UPF0178 family.

In Exiguobacterium sibiricum (strain DSM 17290 / CCUG 55495 / CIP 109462 / JCM 13490 / 255-15), this protein is UPF0178 protein Exig_1155.